The chain runs to 79 residues: Serine protease inhibitor Kazal-type 1 (79 aa).

Positions 1-23 are cleaved as a signal peptide; that stretch reads MKVASIFLLTALVLMSLSGNSGA. The Kazal-like domain maps to 26–79; sequence LGREAKCTNEVNGCPRIYNPVCGTDGVTYSNECLLCMENKERQTPVLIQKSGPC. Intrachain disulfides connect Cys-32–Cys-61, Cys-39–Cys-58, and Cys-47–Cys-79.

Its subcellular location is the secreted. Serine protease inhibitor which exhibits anti-trypsin activity. In the pancreas, protects against trypsin-catalyzed premature activation of zymogens. Its function is as follows. In the male reproductive tract, binds to sperm heads where it modulates sperm capacitance by inhibiting calcium uptake and nitrogen oxide (NO) production. This chain is Serine protease inhibitor Kazal-type 1 (SPINK1), found in Bos taurus (Bovine).